We begin with the raw amino-acid sequence, 186 residues long: UPF0301 protein LHK_02881 (186 aa).

Belongs to the UPF0301 (AlgH) family.

The polypeptide is UPF0301 protein LHK_02881 (Laribacter hongkongensis (strain HLHK9)).